Reading from the N-terminus, the 797-residue chain is Protocadherin-3 (797 aa).

The signal sequence occupies residues 1-30 (METALAKIPQQRQVFFLTILSLLWKSSSEA). Residues 31-691 (IRYSMPEETE…DNYDVLTLYL (661 aa)) are Extracellular-facing. Cadherin domains follow at residues 35–133 (MPEE…SPEF), 138–242 (MLLT…SPQF), 247–346 (YKVQ…APEL), 351–450 (LTVL…APAF), and 455–560 (YTMF…APFV). Residues N169, N276, and N417 are each glycosylated (N-linked (GlcNAc...) asparagine). N-linked (GlcNAc...) asparagine glycosylation occurs at N566. One can recognise a Cadherin 6 domain in the interval 567 to 670 (ASAPCTELLP…VVDGFSQPYL (104 aa)). The chain crosses the membrane as a helical span at residues 692-712 (VIALASVSSLFLLSVVLFVGV). Residues 713-797 (RLCRRAREAS…AVVHNSVGFY (85 aa)) are Cytoplasmic-facing.

In terms of tissue distribution, expressed in brain.

It localises to the cell membrane. Potential calcium-dependent cell-adhesion protein. May be involved in the establishment and maintenance of specific neuronal connections in the brain. This is Protocadherin-3 (Pcdh3) from Rattus norvegicus (Rat).